Consider the following 149-residue polypeptide: Large ribosomal subunit protein uL13 (149 aa).

Belongs to the universal ribosomal protein uL13 family. Part of the 50S ribosomal subunit.

In terms of biological role, this protein is one of the early assembly proteins of the 50S ribosomal subunit, although it is not seen to bind rRNA by itself. It is important during the early stages of 50S assembly. The protein is Large ribosomal subunit protein uL13 of Thermosipho africanus (strain TCF52B).